The sequence spans 279 residues: Ultraviolet N-glycosylase/AP lyase (279 aa).

One can recognise a HhH domain in the interval Leu123–Gly142. Positions 203, 210, 213, and 219 each coordinate [4Fe-4S] cluster. Residues Thr256–Arg279 form a disordered region.

It belongs to the Nth/MutY family. The cofactor is [4Fe-4S] cluster.

Its function is as follows. DNA repair enzyme that has both DNA N-glycosylase activity and AP-lyase activity. Initiates repair at cis-syn pyrimidine dimers. Proceeds via an imino enzyme:DNA intermediate. This Micrococcus luteus (strain ATCC 4698 / DSM 20030 / JCM 1464 / CCM 169 / CCUG 5858 / IAM 1056 / NBRC 3333 / NCIMB 9278 / NCTC 2665 / VKM Ac-2230) (Micrococcus lysodeikticus) protein is Ultraviolet N-glycosylase/AP lyase (pdg).